An 88-amino-acid chain; its full sequence is Small ribosomal subunit protein uS15 (88 aa).

Belongs to the universal ribosomal protein uS15 family. In terms of assembly, part of the 30S ribosomal subunit. Forms a bridge to the 50S subunit in the 70S ribosome, contacting the 23S rRNA.

One of the primary rRNA binding proteins, it binds directly to 16S rRNA where it helps nucleate assembly of the platform of the 30S subunit by binding and bridging several RNA helices of the 16S rRNA. In terms of biological role, forms an intersubunit bridge (bridge B4) with the 23S rRNA of the 50S subunit in the ribosome. This is Small ribosomal subunit protein uS15 from Mycoplasmopsis pulmonis (strain UAB CTIP) (Mycoplasma pulmonis).